The following is a 457-amino-acid chain: Adenylosuccinate synthetase (457 aa).

GTP is bound by residues 40–46 (GDEGKGK) and 70–72 (GHT). Catalysis depends on D41, which acts as the Proton acceptor. Positions 41 and 70 each coordinate Mg(2+). Residues 41-44 (DEGK), 68-71 (NAGH), T161, R175, N255, T270, and R334 contribute to the IMP site. H71 (proton donor) is an active-site residue. Substrate is bound at residue 330-336 (VTTGRKR). Residues R336, 362-364 (KLD), and 444-446 (GVG) contribute to the GTP site.

This sequence belongs to the adenylosuccinate synthetase family. As to quaternary structure, homodimer. The cofactor is Mg(2+).

The protein resides in the cytoplasm. It carries out the reaction IMP + L-aspartate + GTP = N(6)-(1,2-dicarboxyethyl)-AMP + GDP + phosphate + 2 H(+). It participates in purine metabolism; AMP biosynthesis via de novo pathway; AMP from IMP: step 1/2. Plays an important role in the de novo pathway and in the salvage pathway of purine nucleotide biosynthesis. Catalyzes the first committed step in the biosynthesis of AMP from IMP. In Caenorhabditis elegans, this protein is Adenylosuccinate synthetase.